A 1043-amino-acid chain; its full sequence is Rho GTPase-activating protein gacZ (1043 aa).

The segment at 1–44 is disordered; sequence MTTTNTSIFGPRVNNSKFNNNNNNNNNNNNNNNNTSNNNNSNII. A compositionally biased stretch (low complexity) spans 14–44; that stretch reads NNSKFNNNNNNNNNNNNNNNNTSNNNNSNII. The Zn(2+) site is built by C71, C74, C82, C85, C91, H95, H103, and C107. Residues 71-107 form an MYND-type; atypical zinc finger; the sequence is CVICKSKNVQVCTGCLMVYYCGAEHQNIDWPNHKSLC. 6 disordered regions span residues 137–163, 199–532, 546–594, 614–690, 706–772, and 801–842; these read SGNR…NNNN, HLQQ…NNSN, DGLS…NGNR, FYQS…TNNN, NTSQ…QLSA, and NKVS…NNNN. Residues 201–225 are compositionally biased toward low complexity; that stretch reads QQQIQQTQQTQQQPPPTTTSIPTQP. Positions 241-253 are enriched in polar residues; the sequence is SFKSSSSGDNTPI. 2 stretches are compositionally biased toward low complexity: residues 254–293 and 307–411; these read NQSP…NMSG and NSIN…TNEE. Over residues 453–466 the composition is skewed to polar residues; sequence GTLKQSSSSDSIYF. 2 stretches are compositionally biased toward low complexity: residues 467–532 and 547–594; these read NNNN…NNSN and GLSY…NGNR. Positions 615–625 are enriched in polar residues; that stretch reads YQSNKNQSNGY. Over residues 644 to 671 the composition is skewed to acidic residues; it reads ENDDSHEECDDDDDDDDGGGQDGDDGLD. Low complexity-rich tracts occupy residues 726-736, 752-771, 801-821, and 829-842; these read DTQSQSTNSTT, SSDD…SQLS, NKVS…NNNN, and NNNN…NNNN. The stretch at 825-852 forms a coiled coil; the sequence is DHNENNNNNNNNINNNNNNNNNNIENII. In terms of domain architecture, Rho-GAP spans 855-1043; the sequence is IPLEEAVKKS…FGIQTYNYNS (189 aa).

Its subcellular location is the cytoplasm. Functionally, rho GTPase-activating protein involved in the signal transduction pathway. In Dictyostelium discoideum (Social amoeba), this protein is Rho GTPase-activating protein gacZ (gacZ).